Here is a 222-residue protein sequence, read N- to C-terminus: 7-carboxy-7-deazaguanine synthase (222 aa).

Residues 16–18 and arginine 31 contribute to the substrate site; that span reads LQG. The Radical SAM core domain occupies 22–222; sequence NLGRPAVFVR…IMAWGNARGK (201 aa). Residues cysteine 35, cysteine 39, and cysteine 42 each coordinate [4Fe-4S] cluster. A Mg(2+)-binding site is contributed by threonine 44. Threonine 77 contributes to the substrate binding site. S-adenosyl-L-methionine is bound by residues glycine 79 and 126–128; that span reads SPK.

It belongs to the radical SAM superfamily. 7-carboxy-7-deazaguanine synthase family. As to quaternary structure, homodimer. It depends on [4Fe-4S] cluster as a cofactor. The cofactor is S-adenosyl-L-methionine. Requires Mg(2+) as cofactor.

It catalyses the reaction 6-carboxy-5,6,7,8-tetrahydropterin + H(+) = 7-carboxy-7-deazaguanine + NH4(+). It participates in purine metabolism; 7-cyano-7-deazaguanine biosynthesis. In terms of biological role, catalyzes the complex heterocyclic radical-mediated conversion of 6-carboxy-5,6,7,8-tetrahydropterin (CPH4) to 7-carboxy-7-deazaguanine (CDG), a step common to the biosynthetic pathways of all 7-deazapurine-containing compounds. This is 7-carboxy-7-deazaguanine synthase from Pyrobaculum aerophilum (strain ATCC 51768 / DSM 7523 / JCM 9630 / CIP 104966 / NBRC 100827 / IM2).